The following is a 178-amino-acid chain: MEQFHGTTIVSVRRGDKVALGGDGQVTLGNIVMKGGARKVRRIYNNQVLVGFAGGTADAFSLLDRFEAKLEKHQGNLTRAAVELAKDWRTDRMLRRLEAMLITADATTTLVITGNGDVLDPEGGICAIGSGGAYAQAAARALAENTDMSPREIVEKSLEIAGDMCIYTNHNRIIETIE.

Thr7 is a catalytic residue. Na(+)-binding residues include Gly162, Cys165, and Thr168.

It belongs to the peptidase T1B family. HslV subfamily. In terms of assembly, a double ring-shaped homohexamer of HslV is capped on each side by a ring-shaped HslU homohexamer. The assembly of the HslU/HslV complex is dependent on binding of ATP.

It is found in the cytoplasm. It carries out the reaction ATP-dependent cleavage of peptide bonds with broad specificity.. Its activity is regulated as follows. Allosterically activated by HslU binding. Protease subunit of a proteasome-like degradation complex believed to be a general protein degrading machinery. The protein is ATP-dependent protease subunit HslV of Burkholderia vietnamiensis (strain G4 / LMG 22486) (Burkholderia cepacia (strain R1808)).